Reading from the N-terminus, the 95-residue chain is Co-chaperonin GroES (95 aa).

The protein belongs to the GroES chaperonin family. As to quaternary structure, heptamer of 7 subunits arranged in a ring. Interacts with the chaperonin GroEL.

It localises to the cytoplasm. Its function is as follows. Together with the chaperonin GroEL, plays an essential role in assisting protein folding. The GroEL-GroES system forms a nano-cage that allows encapsulation of the non-native substrate proteins and provides a physical environment optimized to promote and accelerate protein folding. GroES binds to the apical surface of the GroEL ring, thereby capping the opening of the GroEL channel. The polypeptide is Co-chaperonin GroES (Oleidesulfovibrio alaskensis (strain ATCC BAA-1058 / DSM 17464 / G20) (Desulfovibrio alaskensis)).